A 157-amino-acid chain; its full sequence is Protein-export protein SecB (157 aa).

It belongs to the SecB family. As to quaternary structure, homotetramer, a dimer of dimers. One homotetramer interacts with 1 SecA dimer.

The protein localises to the cytoplasm. In terms of biological role, one of the proteins required for the normal export of preproteins out of the cell cytoplasm. It is a molecular chaperone that binds to a subset of precursor proteins, maintaining them in a translocation-competent state. It also specifically binds to its receptor SecA. This chain is Protein-export protein SecB, found in Shewanella frigidimarina (strain NCIMB 400).